Reading from the N-terminus, the 482-residue chain is MQISSSSSSNFFSSLYADEPALITLTIVVVVVVLLFKWWLHWKEQRLRLPPGSMGLPYIGETLRLYTENPNSFFATRQNKYGDIFKTHILGCPCVMISSPEAARMVLVSKAHLFKPTYPPSKERMIGPEALFFHQGPYHSTLKRLVQSSFMPSALRPTVSHIELLVLQTLSSWTSQKSINTLEYMKRYAFDVAIMSAFGDKEEPTTIDVIKLLYQRLERGYNSMPLDLPGTLFHKSMKARIELSEELRKVIEKRRENGREEGGLLGVLLGAKDQKRNGLSDSQIADNIIGVIFAATDTTASVLTWLLKYLHDHPNLLQEVSREQFSIRQKIKKENRRISWEDTRKMPLTTRVIQETLRAASVLSFTFREAVQDVEYDGYLIPKGWKVLPLFRRIHHSSEFFPDPEKFDPSRFEVAPKPYTYMPFGNGVHSCPGSELAKLEMLILLHHLTTSFRWEVIGDEEGIQYGPFPVPKKGLPIRVTPI.

A helical membrane pass occupies residues 20 to 40 (PALITLTIVVVVVVLLFKWWL). Residue C431 participates in heme binding.

It belongs to the cytochrome P450 family. Requires heme as cofactor. In terms of tissue distribution, mainly expressed in dry seeds. Lower expression in rosette leaves, flowers, siliques and stems. Not expressed in roots. Expressed in both endosperm and vascular tissues of embryo during the seed development and in cortex and endodermis in germinating embryo.

The protein resides in the membrane. It carries out the reaction 2-cis-(+)-abscisate + reduced [NADPH--hemoprotein reductase] + O2 = (+)-8'-hydroxyabscisate + oxidized [NADPH--hemoprotein reductase] + H2O + H(+). It participates in plant hormone degradation; abscisic acid degradation. Functionally, involved in the oxidative degradation of abscisic acid, but not in the isomerization of the produced 8'-hydroxyabscisic acid (8'-OH-ABA) to (-)-phaseic acid (PA). Involved in the control of seed dormancy and germination. The chain is Abscisic acid 8'-hydroxylase 2 (CYP707A2) from Arabidopsis thaliana (Mouse-ear cress).